The primary structure comprises 789 residues: Disintegrin and metalloproteinase domain-containing protein 7 (789 aa).

An N-terminal signal peptide occupies residues 1 to 25; it reads MFPTGIFLMSVLISQMQGRGIVGVE. The propeptide occupies 26–176; it reads GQELVHPKKL…NYSCEGLNFT (151 aa). Asn-84, Asn-167, and Asn-174 each carry an N-linked (GlcNAc...) asparagine glycan. Over 177 to 668 the chain is Extracellular; the sequence is KKSTLIDAKI…WGEALNLTSV (492 aa). Residues 199-393 form the Peptidase M12B domain; that stretch reads KFIELFVVAD…QKPACILNNP (195 aa). Intrachain disulfides connect Cys-310–Cys-388, Cys-350–Cys-372, Cys-352–Cys-357, and Cys-459–Cys-479. The Disintegrin domain maps to 401 to 487; sequence YPFCGNKKVD…ECPKDESQAN (87 aa). Residues Asn-583, Asn-628, and Asn-664 are each glycosylated (N-linked (GlcNAc...) asparagine). Residues 669-689 form a helical membrane-spanning segment; the sequence is SIMVVVLVMVIIGVGLVILLI. Residues 690–789 lie on the Cytoplasmic side of the membrane; that stretch reads RYQKCIKMKQ…DSQSDCTRLG (100 aa). Over residues 762 to 771 the composition is skewed to basic and acidic residues; it reads DPRGIADPKQ. A disordered region spans residues 762–789; it reads DPRGIADPKQNDNMNLNLDSQSDCTRLG. The segment covering 772-789 has biased composition (polar residues); that stretch reads NDNMNLNLDSQSDCTRLG.

In terms of assembly, interacts with ITM2B in sperm; the interaction increases following capacitation. Interacts with HSPA5 and CANX. As to expression, expressed specifically in the caput region of the epididymis (at protein level).

The protein resides in the membrane. Required for normal male fertility via maintenance of epithelial cell morphology in the caput epididymis and subsequently correct epididymis lumen structure required for sperm development. Plays a role in sperm motility, flagella morphology and tyrosine phosphorylation during sperm capacitance. Plays a role in normal expression levels of HSPA5, ITM2B and ADAM2 in sperm both prior to and post-capacitation. This is a non catalytic metalloprotease-like protein. The sequence is that of Disintegrin and metalloproteinase domain-containing protein 7 from Rattus norvegicus (Rat).